Consider the following 90-residue polypeptide: Antitoxin epsilon 1 (90 aa).

Belongs to the epsilon antitoxin family. In the presence of the zeta toxin, forms an inactive PezA(2)PezT(2) heterotetramer.

Functionally, antitoxin component of a type II toxin-antitoxin (TA) system. Neutralizes the toxic effect of zeta toxin. Part of a postsegregational killing (PSK) system involved in the killing of plasmid-free cells. Continuous synthesis of the epsilon antitoxin is required to counteract the zeta toxin. This chain is Antitoxin epsilon 1, found in Enterococcus faecalis (Streptococcus faecalis).